A 321-amino-acid polypeptide reads, in one-letter code: tRNA(Ile)-lysidine synthase (321 aa).

30–35 lines the ATP pocket; that stretch reads SGGSDS.

The protein belongs to the tRNA(Ile)-lysidine synthase family.

It localises to the cytoplasm. It catalyses the reaction cytidine(34) in tRNA(Ile2) + L-lysine + ATP = lysidine(34) in tRNA(Ile2) + AMP + diphosphate + H(+). In terms of biological role, ligates lysine onto the cytidine present at position 34 of the AUA codon-specific tRNA(Ile) that contains the anticodon CAU, in an ATP-dependent manner. Cytidine is converted to lysidine, thus changing the amino acid specificity of the tRNA from methionine to isoleucine. In Chlamydia trachomatis serovar A (strain ATCC VR-571B / DSM 19440 / HAR-13), this protein is tRNA(Ile)-lysidine synthase.